The primary structure comprises 393 residues: NAD(P)H-quinone oxidoreductase subunit H, chloroplastic (393 aa).

It belongs to the complex I 49 kDa subunit family. As to quaternary structure, NDH is composed of at least 16 different subunits, 5 of which are encoded in the nucleus.

It localises to the plastid. Its subcellular location is the chloroplast thylakoid membrane. The enzyme catalyses a plastoquinone + NADH + (n+1) H(+)(in) = a plastoquinol + NAD(+) + n H(+)(out). It carries out the reaction a plastoquinone + NADPH + (n+1) H(+)(in) = a plastoquinol + NADP(+) + n H(+)(out). In terms of biological role, NDH shuttles electrons from NAD(P)H:plastoquinone, via FMN and iron-sulfur (Fe-S) centers, to quinones in the photosynthetic chain and possibly in a chloroplast respiratory chain. The immediate electron acceptor for the enzyme in this species is believed to be plastoquinone. Couples the redox reaction to proton translocation, and thus conserves the redox energy in a proton gradient. This is NAD(P)H-quinone oxidoreductase subunit H, chloroplastic from Nicotiana tomentosiformis (Tobacco).